The chain runs to 663 residues: MDVGESNERVKDDSALQASPRSPLSSIDLAIDGAMNASIEQLYHNVCEMESSDDQSPSRASFISYGAESRIDLELRHLVGDVGEEGESKKEIILEKKEESNGEGSLSQKKPLSNGKKVAKTSPNNPKMPGSRISSRKSPDLGKVSVDEESPELGVVLLKQARELVSSGENLNKALDLALRAVKVFEKCGEGEKQLGLNLVMSLHILAAIYAGLGRYNDAVPVLERSIEIPMIEDGEDHALAKFAGCMQLGDMYGLMGQVENSIMLYTAGLEIQRQVLGESDARVGETCRYLAEAHVQAMQFEEASRLCQMALDIHKENGAAATASIEEAADRKLMGLICDAKGDYEVALEHYVLASMAMSSQNHREDVAAVDCSIGDAYMSLARFDEAIFAYQKALAVFKQGKGETHSSVALVYVRLADLYNKIGKTRDSKSYCENALKIYLKPTPGTPMEEVATGFIEISAIYQSMNELDQALKLLRRALKIYANAPGQQNTIAGIEAQMGVVTYMMGNYSESYDIFKSAISKFRNSGEKKTALFGIALNQMGLACVQRYAINEAADLFEEAKTILEKECGPYHPDTLAVYSNLAGTYDAMGRLDDAIEILEYVVGTREEKLGTANPEVEDEKQRLAALLKEAGRGRSKRNRALLTLLDNNPEIANGQRPVY.

Basic and acidic residues predominate over residues 1 to 14 (MDVGESNERVKDDS). Disordered stretches follow at residues 1-24 (MDVG…RSPL) and 86-146 (GESK…KVSV). S19 bears the Phosphoserine mark. The segment covering 86–100 (GESKKEIILEKKEES) has biased composition (basic and acidic residues). Residues 102-111 (GEGSLSQKKP) are compositionally biased toward polar residues. 11 TPR repeats span residues 147–181 (DEES…ALRA), 200–233 (VMSL…PMIE), 243–276 (FAGC…QRQV), 285–318 (GETC…HKEN), 329–363 (AADR…SSQN), 369–402 (AAVD…FKQG), 411–444 (ALVY…YLKP), 454–487 (ATGF…YANA), 495–528 (AGIE…FRNS), 537–570 (GIAL…LEKE), and 579–612 (LAVY…REEK).

Belongs to the kinesin light chain family.

This is Protein KINESIN LIGHT CHAIN-RELATED 2 from Arabidopsis thaliana (Mouse-ear cress).